We begin with the raw amino-acid sequence, 292 residues long: RNA 5'-monophosphate methyltransferase (292 aa).

Positions 1-22 (MAASTEQATGGVEKTAAEEKPR) are disordered. S-adenosyl-L-methionine-binding positions include R46, N76, D110, 135 to 136 (DF), and M164. The 222-residue stretch at 53–274 (ELLRRLFPQS…KQATETHPIP (222 aa)) folds into the Bin3-type SAM domain.

Belongs to the methyltransferase superfamily. Interacts with DICER1; the interaction may be mediated by RNA.

The protein localises to the cytoplasm. The catalysed reaction is a 5'-end 5'-phospho-ribonucleoside-RNA + S-adenosyl-L-methionine = a 5'-end (5'-methylphospho)-ribonucleoside-RNA + S-adenosyl-L-homocysteine. It carries out the reaction a 5'-end 5'-phospho-ribonucleoside-RNA + 2 S-adenosyl-L-methionine = a 5'-end (5'-bismethylphospho)-ribonucleoside-RNA + 2 S-adenosyl-L-homocysteine. Its function is as follows. O-methyltransferase that specifically monomethylates 5'-monophosphate of cytoplasmic histidyl tRNA (tRNA(His)), acting as a capping enzyme by protecting tRNA(His) from cleavage by DICER1. Also able, with less efficiently, to methylate the 5' monophosphate of a subset of pre-miRNAs, acting as a negative regulator of miRNA processing. The 5' monophosphate of pre-miRNAs is recognized by DICER1 and is required for pre-miRNAs processing: methylation at this position reduces the processing of pre-miRNAs by DICER1. Was also reported to mediate dimethylation of pre-miR-145; however dimethylation cannot be reproduced by another group which observes a monomethylation of pre-miR-145. In Bos taurus (Bovine), this protein is RNA 5'-monophosphate methyltransferase (BCDIN3D).